Reading from the N-terminus, the 234-residue chain is Short neuropeptide F (234 aa).

The first 22 residues, 1 to 22, serve as a signal peptide directing secretion; it reads MYRINLTTFTLLLVLAVGSLMS. The propeptide occupies 23 to 56; sequence ESLHPSDGAINDLYEYLLQREYAAPVSYADHQIK. Phenylalanine 69 and phenylalanine 101 each carry phenylalanine amide. Tryptophan 132 carries the post-translational modification Tryptophan amide. Phenylalanine 165 carries the post-translational modification Phenylalanine amide. Positions 181-190 are enriched in polar residues; the sequence is TTGQQAQPAN. The disordered stretch occupies residues 181–234; sequence TTGQQAQPANEASEKRAPTQRLRWGRSDPALAKDSSEDKALDVEESENTNADDK. Tryptophan 204 carries the tryptophan amide modification. Residues 207-234 constitute a propeptide that is removed on maturation; sequence SDPALAKDSSEDKALDVEESENTNADDK.

This sequence belongs to the NPY family. Expressed in all body parts of larva, pupae and adults.

It localises to the secreted. Plays a role in controlling food intake and regulating body size. This is Short neuropeptide F from Anopheles gambiae (African malaria mosquito).